We begin with the raw amino-acid sequence, 999 residues long: Caspase recruitment domain-containing protein 14 (999 aa).

Residues 15 to 107 form the CARD domain; the sequence is DEEMLWDMLE…DVYTLVTGLQ (93 aa). Positions 125–411 form a coiled coil; sequence TECLAGAISS…QLRRLQAEAP (287 aa). The tract at residues 409–565 is maintains the protein in an inactive state; the sequence is EAPGGPKQEA…RRPARKILSQ (157 aa). S541 is modified (phosphoserine). One can recognise a PDZ domain in the interval 572–655; the sequence is QGDALLEQIG…SCYLSVKINT (84 aa). Positions 803–986 constitute a Guanylate kinase-like domain; the sequence is SESCFTLAPY…LLSCVRLAIA (184 aa).

In terms of assembly, interacts (via CARD domain) with BCL10 (via CARD domain). Forms a complex with MALT1 and BCL10; resulting in the formation of a CBM (CARD14-BLC10-MALT1) complex. Interacts with TRAF2, TRAF3 and TRAF6.

It localises to the cytoplasm. In terms of biological role, acts as a scaffolding protein that can activate the inflammatory transcription factor NF-kappa-B and p38/JNK MAP kinase signaling pathways. Forms a signaling complex with BCL10 and MALT1, and activates MALT1 proteolytic activity and inflammatory gene expression. MALT1 is indispensable for CARD14-induced activation of NF-kappa-B and p38/JNK MAP kinases. May play a role in signaling mediated by TRAF2, TRAF3 and TRAF6 and protects cells against apoptosis. In Mus musculus (Mouse), this protein is Caspase recruitment domain-containing protein 14 (Card14).